Reading from the N-terminus, the 475-residue chain is Membrane-bound lytic murein transglycosylase F (475 aa).

A signal peptide spans 1-15 (MKKLLLILCCITLLA). Residues 16-258 (ACQKVVVEQE…HLNEKYFAHV (243 aa)) form a non-LT domain region. The LT domain stretch occupies residues 259-475 (KRFDYVDTRA…KTEAAQPQQP (217 aa)). The active site involves Glu303.

It in the N-terminal section; belongs to the bacterial solute-binding protein 3 family. This sequence in the C-terminal section; belongs to the transglycosylase Slt family.

Its subcellular location is the cell outer membrane. It catalyses the reaction Exolytic cleavage of the (1-&gt;4)-beta-glycosidic linkage between N-acetylmuramic acid (MurNAc) and N-acetylglucosamine (GlcNAc) residues in peptidoglycan, from either the reducing or the non-reducing ends of the peptidoglycan chains, with concomitant formation of a 1,6-anhydrobond in the MurNAc residue.. Functionally, murein-degrading enzyme that degrades murein glycan strands and insoluble, high-molecular weight murein sacculi, with the concomitant formation of a 1,6-anhydromuramoyl product. Lytic transglycosylases (LTs) play an integral role in the metabolism of the peptidoglycan (PG) sacculus. Their lytic action creates space within the PG sacculus to allow for its expansion as well as for the insertion of various structures such as secretion systems and flagella. The chain is Membrane-bound lytic murein transglycosylase F from Shewanella halifaxensis (strain HAW-EB4).